Reading from the N-terminus, the 486-residue chain is N-succinylglutamate 5-semialdehyde dehydrogenase (486 aa).

NAD(+) is bound at residue 220-225 (GSSRTG). Catalysis depends on residues E243 and C277.

It belongs to the aldehyde dehydrogenase family. AstD subfamily.

The catalysed reaction is N-succinyl-L-glutamate 5-semialdehyde + NAD(+) + H2O = N-succinyl-L-glutamate + NADH + 2 H(+). It participates in amino-acid degradation; L-arginine degradation via AST pathway; L-glutamate and succinate from L-arginine: step 4/5. In terms of biological role, catalyzes the NAD-dependent reduction of succinylglutamate semialdehyde into succinylglutamate. The sequence is that of N-succinylglutamate 5-semialdehyde dehydrogenase from Shewanella woodyi (strain ATCC 51908 / MS32).